The following is a 342-amino-acid chain: Galactose mutarotase (342 aa).

Residue A2 is modified to N-acetylalanine. S14 carries the post-translational modification Phosphoserine. Beta-D-galactose is bound by residues 81-82 (NR) and H107. S124 is modified (phosphoserine). H176 acts as the Proton donor in catalysis. Beta-D-galactose-binding positions include 176–178 (HSY), D243, Q279, and E307. The active-site Proton acceptor is E307.

This sequence belongs to the aldose epimerase family. As to quaternary structure, monomer.

Its subcellular location is the cytoplasm. The enzyme catalyses alpha-D-galactose = beta-D-galactose. It carries out the reaction alpha-D-glucose = beta-D-glucose. Its pathway is carbohydrate metabolism; hexose metabolism. It functions in the pathway carbohydrate metabolism; galactose metabolism. Its function is as follows. Mutarotase that catalyzes the interconversion of beta-D-galactose and alpha-D-galactose during galactose metabolism. Beta-D-galactose is metabolized in the liver into glucose 1-phosphate, the primary metabolic fuel, by the action of four enzymes that constitute the Leloir pathway: GALM, GALK1 (galactokinase), GALT (galactose-1-phosphate uridylyltransferase) and GALE (UDP-galactose-4'-epimerase). Involved in the maintenance of the equilibrium between the beta- and alpha-anomers of galactose, therefore ensuring a sufficient supply of the alpha-anomer for GALK1. Also active on D-glucose although shows a preference for galactose over glucose. This is Galactose mutarotase (GALM) from Pongo abelii (Sumatran orangutan).